The chain runs to 154 residues: Interleukin-7 (154 aa).

An N-terminal signal peptide occupies residues 1–25; sequence MFHVSFRYIFGIPPLILVLLPVTSS. Disulfide bonds link Cys27–Cys145, Cys58–Cys133, and Cys71–Cys116. N-linked (GlcNAc...) asparagine glycans are attached at residues Asn94 and Asn115.

This sequence belongs to the IL-7/IL-9 family. In terms of assembly, interacts with IL7R and CSF2RG. Three disulfide bonds are present.

It is found in the secreted. Its function is as follows. Hematopoietic cytokine that plays an essential role in the development, expansion, and survival of naive and memory T-cells and B-cells thereby regulating the number of mature lymphocytes and maintaining lymphoid homeostasis. Mechanistically, exerts its biological effects through a receptor composed of IL7RA subunit and the cytokine receptor common subunit gamma/CSF2RG. Binding to the receptor leads to activation of various kinases including JAK1 or JAK3 depending on the cell type and subsequently propagation of signals through activation of several downstream signaling pathways including the PI3K/Akt/mTOR or the JAK-STAT5. The protein is Interleukin-7 (Il7) of Mus musculus (Mouse).